Here is a 70-residue protein sequence, read N- to C-terminus: Large ribosomal subunit protein eL43 (70 aa).

Zn(2+) is bound by residues Cys-36, Cys-39, Cys-55, and Cys-58. A C4-type zinc finger spans residues 36–58 (CPVCKTTGKVVRIASGVWYCKKC).

It belongs to the eukaryotic ribosomal protein eL43 family. Putative zinc-binding subfamily. As to quaternary structure, part of the 50S ribosomal subunit. It depends on Zn(2+) as a cofactor.

Binds to the 23S rRNA. The chain is Large ribosomal subunit protein eL43 from Sulfurisphaera tokodaii (strain DSM 16993 / JCM 10545 / NBRC 100140 / 7) (Sulfolobus tokodaii).